The sequence spans 271 residues: uncharacterized protein (271 aa).

Positions 77–205 (IIGVYFGDAN…SKELLKKLDV (129 aa)) constitute a DOD-type homing endonuclease domain.

This is an uncharacterized protein from Methanocaldococcus jannaschii (strain ATCC 43067 / DSM 2661 / JAL-1 / JCM 10045 / NBRC 100440) (Methanococcus jannaschii).